The following is a 726-amino-acid chain: MAAAKWLIASLAFASSGLAFTPEDFISAPRRGEAIPDPKGELAVFHVSKYNFDKKDRPSGWNLLNLKNGDISVLTTDSDVSEITWLGDGTKVVYVNGTDSVEGGVGIWISDAKNFGNAYKAGSVNGAFSGLKLAKAGDKINFVGYGQSTTKGDLYNEAAAKEAVSSARIYDGLFVRHWDTYVGTQFNAVFSGSLTKNGDKYSFDGKLKNLVQPVKYAESPYPPFGGSGDYDLSSDGKTVAFMSKAPELPKANLTTSYIFLVPHDGSRVAEPINKRNGPRTPQGIEGASSSPVFSPDGKRIAYLQMATKNYESDRRVIHIAEVGSNKPVQRIASSWDRSPEAVKWSSDGRTLYVTAEDHATGKLFTLPADARDNHKPSVVKHDGSVSSFYFIGSSKSVLISGNSLWSNALYQVATPGRPNRKLFYANEHDPELKGLGPKDIEPLWVDGARTKIHSWIVKPTGFDKNKVYPLAFLIHGGPQGSWGDSWSTRWNPRVWADQGYVVVAPNPTGSTGFGQKLTDDITNDWGGAPYKDLVKIWEHVRDHIKYIDTDNGIAAGASFGGFMVNWIQGQDLGRKFKALVSHDGTFVGSSKIGTDELFFIEHDFNGTFFEARQNYDRWDCSKPELVAKWSTPQLVIHNDFDFRLSVAEGVGLFNVLQEKGIPSRFLNFPDETHWVTKPENSLVWHQQVLGWINKWSGINKSNPKSIKLSDCPIEVIDHEAHSYFDY.

The first 19 residues, 1–19 (MAAAKWLIASLAFASSGLA), serve as a signal peptide directing secretion. N-linked (GlcNAc...) asparagine glycosylation is found at N96 and N252. Residues 269 to 291 (AEPINKRNGPRTPQGIEGASSSP) form a disordered region. The active-site Charge relay system is the S558. Residue N605 is glycosylated (N-linked (GlcNAc...) asparagine). Catalysis depends on charge relay system residues D641 and H673. N-linked (GlcNAc...) asparagine glycosylation is present at N699.

This sequence belongs to the peptidase S9C family.

The protein localises to the secreted. This is Dipeptidyl-peptidase 5 (DPPV) from Arthroderma benhamiae (Trichophyton mentagrophytes).